The chain runs to 152 residues: Lipoprotein signal peptidase (152 aa).

A run of 2 helical transmembrane segments spans residues 55–75 (NKMWFFYIITVVFVGFIVFYM) and 85–105 (LGISLGLILGGAIGNFIDRVF). Active-site residues include aspartate 111 and aspartate 129. Residues 124 to 144 (VFNIADSALCIGVVLIIIQTL) traverse the membrane as a helical segment.

It belongs to the peptidase A8 family.

It localises to the cell membrane. The catalysed reaction is Release of signal peptides from bacterial membrane prolipoproteins. Hydrolyzes -Xaa-Yaa-Zaa-|-(S,diacylglyceryl)Cys-, in which Xaa is hydrophobic (preferably Leu), and Yaa (Ala or Ser) and Zaa (Gly or Ala) have small, neutral side chains.. Its pathway is protein modification; lipoprotein biosynthesis (signal peptide cleavage). In terms of biological role, this protein specifically catalyzes the removal of signal peptides from prolipoproteins. In Bacillus cytotoxicus (strain DSM 22905 / CIP 110041 / 391-98 / NVH 391-98), this protein is Lipoprotein signal peptidase.